Consider the following 436-residue polypeptide: Protein translocase subunit SecY (436 aa).

Helical transmembrane passes span 17–37 (ILLTISLLTIVRIGSFIPVPY), 72–92 (FGLLSLGILPYINASIIIQLL), 122–142 (TFFWAIVESISISYSLREVIF), 146–166 (LQVYFLISLSLITGSMIVLWF), 209–229 (FSNIFLLISIFLITTIGCIYI), 269–289 (VMPLVFTSYAILFFSSLFEII), 309–329 (ISYWFLKILFWIFYATLIFFF), and 380–400 (IFLIYNIIGLQILESILNLNI).

This sequence belongs to the SecY/SEC61-alpha family. In terms of assembly, component of the plastid Sec protein translocase complex, which is composed of at least SecY and SecE.

It localises to the plastid. The protein resides in the chloroplast thylakoid membrane. The central subunit of the protein translocation channel SecYE. Consists of two halves. These two domains form a lateral gate at the front which open onto the bilayer between TMs 2 and 7, and are clamped together by SecE at the back. The channel is closed by both a pore ring composed of hydrophobic SecY resides and a short helix (helix 2A) on the extracellular side of the membrane which forms a plug. The polypeptide is Protein translocase subunit SecY (Vaucheria litorea (Yellow-green alga)).